Consider the following 349-residue polypeptide: MSKMSEEEEFLLFKNISLVGPWDGPQYHLAPVWAFHLQAVFMGFVFFVGTPLNATVLVATLRYRKLRQPLNYILVNVSLGGFIYCIFSVFIVFITSCYGYFVFGRHVCALEAFLGCTAGLVTGWSLAFLAFERYIIICKPFGNFRFSSKHALMVVVATWTIGIGVSIPPFFGWSRFVPEGLQCSCGPDWYTVGTKYYSEYYTWFLFIFCYIVPLSLICFSYSQLLGALRAVAAQQQESASTQKAEREVSHMVVVMVGSFCLCYTPYAALAMYIVNNRNHGVDLRLVTIPAFFSKSACVYNPIIYCFMNKQFRACIMEMVCGKPMTDESELSSSQKTEVSTVSSSQVGPN.

At 1-34 the chain is on the extracellular side; it reads MSKMSEEEEFLLFKNISLVGPWDGPQYHLAPVWA. A glycan (N-linked (GlcNAc...) asparagine) is linked at Asn-15. The helical transmembrane segment at 35–59 threads the bilayer; it reads FHLQAVFMGFVFFVGTPLNATVLVA. Topologically, residues 60–71 are cytoplasmic; that stretch reads TLRYRKLRQPLN. The helical transmembrane segment at 72-97 threads the bilayer; the sequence is YILVNVSLGGFIYCIFSVFIVFITSC. Topologically, residues 98–111 are extracellular; the sequence is YGYFVFGRHVCALE. A disulfide bridge connects residues Cys-108 and Cys-185. A helical membrane pass occupies residues 112–131; it reads AFLGCTAGLVTGWSLAFLAF. At 132 to 150 the chain is on the cytoplasmic side; sequence ERYIIICKPFGNFRFSSKH. The helical transmembrane segment at 151 to 174 threads the bilayer; sequence ALMVVVATWTIGIGVSIPPFFGWS. Residues 175–200 are Extracellular-facing; that stretch reads RFVPEGLQCSCGPDWYTVGTKYYSEY. The helical transmembrane segment at 201–228 threads the bilayer; sequence YTWFLFIFCYIVPLSLICFSYSQLLGAL. At 229–250 the chain is on the cytoplasmic side; sequence RAVAAQQQESASTQKAEREVSH. A helical transmembrane segment spans residues 251 to 274; the sequence is MVVVMVGSFCLCYTPYAALAMYIV. At 275–282 the chain is on the extracellular side; the sequence is NNRNHGVD. The chain crosses the membrane as a helical span at residues 283-307; it reads LRLVTIPAFFSKSACVYNPIIYCFM. Lys-294 bears the N6-(retinylidene)lysine mark. The Cytoplasmic segment spans residues 308–349; it reads NKQFRACIMEMVCGKPMTDESELSSSQKTEVSTVSSSQVGPN. The disordered stretch occupies residues 327-349; it reads ESELSSSQKTEVSTVSSSQVGPN. The segment covering 330–349 has biased composition (polar residues); sequence LSSSQKTEVSTVSSSQVGPN.

This sequence belongs to the G-protein coupled receptor 1 family. Opsin subfamily. Post-translationally, phosphorylated on some or all of the serine and threonine residues present in the C-terminal region.

It is found in the cell membrane. Its subcellular location is the photoreceptor inner segment. The protein localises to the cell projection. It localises to the cilium. The protein resides in the photoreceptor outer segment. It is found in the cytoplasm. Its subcellular location is the perinuclear region. Its function is as follows. Visual pigments are the light-absorbing molecules that mediate vision. They consist of an apoprotein, opsin, covalently linked to cis-retinal. Required for the maintenance of cone outer segment organization in the ventral retina, but not essential for the maintenance of functioning cone photoreceptors. Involved in ensuring correct abundance and localization of retinal membrane proteins. May increase spectral sensitivity in dim light. The protein is Short-wave-sensitive opsin 1 (OPN1SW) of Bos taurus (Bovine).